Reading from the N-terminus, the 136-residue chain is uncharacterized protein (136 aa).

This is an uncharacterized protein from Bacillus subtilis (strain 168).